The sequence spans 463 residues: Retinoic acid receptor RXR-gamma (463 aa).

The segment at 1–138 (MYGNYSHFMK…TSPGSLVKHI (138 aa)) is modulating. The segment at 16–53 (GGSPGHTGSTSMSPSVALPTGKPMDSHPSYTDTPVSAP) is disordered. 2 NR C4-type zinc fingers span residues 139–159 (CAICGDRSSGKHYGVYSCEGC) and 175–199 (CRDNKDCLIDKRQRNRCQYCRYQKC). The segment at residues 139 to 204 (CAICGDRSSG…RYQKCLVMGM (66 aa)) is a DNA-binding region (nuclear receptor). Residues 205–230 (KREAVQEERQRSRERAESEAECASTG) form a hinge region. Residues 231–459 (HEDMPVERIL…TFLMEMLETP (229 aa)) enclose the NR LBD domain.

This sequence belongs to the nuclear hormone receptor family. NR2 subfamily. In terms of assembly, homodimer. Heterodimer with a RAR molecule. Binds DNA preferentially as a RAR/RXR heterodimer. Interacts with RARA. Acetylated by EP300. In terms of tissue distribution, expressed in the liver, but not detected in the adrenal gland (at protein level). Restricted expression in adrenal gland, kidney, liver, brain and lungs. Strong expression in heart and muscles.

Its subcellular location is the nucleus. The protein localises to the cytoplasm. Receptor for retinoic acid. Retinoic acid receptors bind as heterodimers to their target response elements in response to their ligands, all-trans or 9-cis retinoic acid, and regulate gene expression in various biological processes. The RAR/RXR heterodimers bind to the retinoic acid response elements (RARE) composed of tandem 5'-AGGTCA-3' sites known as DR1-DR5. The high affinity ligand for RXRs is 9-cis retinoic acid. The polypeptide is Retinoic acid receptor RXR-gamma (Rxrg) (Rattus norvegicus (Rat)).